A 33-amino-acid chain; its full sequence is MPRRRRSSRPPVRRRRRPRVSRRRRRRGGRRRR.

The tract at residues 1–33 (MPRRRRSSRPPVRRRRRPRVSRRRRRRGGRRRR) is disordered.

As to expression, testis.

Its subcellular location is the nucleus. It is found in the chromosome. Its function is as follows. Protamines substitute for histones in the chromatin of sperm during the haploid phase of spermatogenesis. They compact sperm DNA into a highly condensed, stable and inactive complex. This is Protamine TP14 from Oncorhynchus mykiss (Rainbow trout).